The following is a 331-amino-acid chain: Probable cyclic nucleotide synthase IK1_05630 (331 aa).

It belongs to the CD-NTase family. D12 subfamily.

Cyclic nucleotide synthase (second messenger synthase) of a CBASS antivirus system. CBASS (cyclic oligonucleotide-based antiphage signaling system) provides immunity against bacteriophage. The CD-NTase protein synthesizes cyclic nucleotides in response to infection; these serve as specific second messenger signals. The signals activate a diverse range of effectors, leading to bacterial cell death and thus abortive phage infection. A type I-B CBASS system. Its function is as follows. Probably a cyclic nucleotide synthase that makes second messenger nucleotide which activates a CBASS antiviral defense system. Functionally, protects B.subtilis against phage infection. When IK1_05630 and IK1_05631 are introduced in B.subtilis BEST7003 there is 1000-fold protection against phage SBSphiC. Both genes are required for protection. Activation leads to bacterial cell lysis and death, which occurs before the phage has finished its replication cycle, thus protecting non-infected bacteria by aborting the phage infection and preventing its propagation. This is Probable cyclic nucleotide synthase IK1_05630 from Bacillus cereus (strain VD146).